Here is a 397-residue protein sequence, read N- to C-terminus: Elongation factor Tu (397 aa).

A tr-type G domain is found at 10–207 (KPHVNIGTIG…ACDSYIPEPQ (198 aa)). The G1 stretch occupies residues 19–26 (GHIDHGKT). 19-26 (GHIDHGKT) lines the GTP pocket. Thr26 lines the Mg(2+) pocket. Positions 60–64 (GITIA) are G2. The tract at residues 81 to 84 (DCPG) is G3. GTP is bound by residues 81–85 (DCPGH) and 136–139 (NKCD). A G4 region spans residues 136–139 (NKCD). Residues 174–176 (SAL) are G5.

Belongs to the TRAFAC class translation factor GTPase superfamily. Classic translation factor GTPase family. EF-Tu/EF-1A subfamily. As to quaternary structure, monomer.

The protein localises to the cytoplasm. The catalysed reaction is GTP + H2O = GDP + phosphate + H(+). Its function is as follows. GTP hydrolase that promotes the GTP-dependent binding of aminoacyl-tRNA to the A-site of ribosomes during protein biosynthesis. This chain is Elongation factor Tu, found in Nitratidesulfovibrio vulgaris (strain DSM 19637 / Miyazaki F) (Desulfovibrio vulgaris).